Consider the following 60-residue polypeptide: Colanic acid capsular biosynthesis activation protein B (60 aa).

The protein is Colanic acid capsular biosynthesis activation protein B (rcsB) of Klebsiella aerogenes (Enterobacter aerogenes).